The following is a 614-amino-acid chain: Elongation factor 4 (614 aa).

The tr-type G domain maps to 10-192 (ALIRNFCIIA…EIVARIPPPV (183 aa)). GTP-binding positions include 22-27 (DHGKST) and 139-142 (NKID).

This sequence belongs to the TRAFAC class translation factor GTPase superfamily. Classic translation factor GTPase family. LepA subfamily.

Its subcellular location is the cell membrane. The enzyme catalyses GTP + H2O = GDP + phosphate + H(+). In terms of biological role, required for accurate and efficient protein synthesis under certain stress conditions. May act as a fidelity factor of the translation reaction, by catalyzing a one-codon backward translocation of tRNAs on improperly translocated ribosomes. Back-translocation proceeds from a post-translocation (POST) complex to a pre-translocation (PRE) complex, thus giving elongation factor G a second chance to translocate the tRNAs correctly. Binds to ribosomes in a GTP-dependent manner. The sequence is that of Elongation factor 4 from Thermobifida fusca (strain YX).